The sequence spans 223 residues: Phosphoribosylformylglycinamidine synthase subunit PurQ (223 aa).

One can recognise a Glutamine amidotransferase type-1 domain in the interval 2–223 (KFAVIQFPGS…ASVLKNFVGK (222 aa)). Cys-86 acts as the Nucleophile in catalysis. Residues His-195 and Glu-197 contribute to the active site.

In terms of assembly, part of the FGAM synthase complex composed of 1 PurL, 1 PurQ and 2 PurS subunits.

It localises to the cytoplasm. The enzyme catalyses N(2)-formyl-N(1)-(5-phospho-beta-D-ribosyl)glycinamide + L-glutamine + ATP + H2O = 2-formamido-N(1)-(5-O-phospho-beta-D-ribosyl)acetamidine + L-glutamate + ADP + phosphate + H(+). The catalysed reaction is L-glutamine + H2O = L-glutamate + NH4(+). It functions in the pathway purine metabolism; IMP biosynthesis via de novo pathway; 5-amino-1-(5-phospho-D-ribosyl)imidazole from N(2)-formyl-N(1)-(5-phospho-D-ribosyl)glycinamide: step 1/2. Functionally, part of the phosphoribosylformylglycinamidine synthase complex involved in the purines biosynthetic pathway. Catalyzes the ATP-dependent conversion of formylglycinamide ribonucleotide (FGAR) and glutamine to yield formylglycinamidine ribonucleotide (FGAM) and glutamate. The FGAM synthase complex is composed of three subunits. PurQ produces an ammonia molecule by converting glutamine to glutamate. PurL transfers the ammonia molecule to FGAR to form FGAM in an ATP-dependent manner. PurS interacts with PurQ and PurL and is thought to assist in the transfer of the ammonia molecule from PurQ to PurL. This Lactococcus lactis subsp. lactis (strain IL1403) (Streptococcus lactis) protein is Phosphoribosylformylglycinamidine synthase subunit PurQ.